The chain runs to 237 residues: Uridylate kinase (237 aa).

Residue 12-15 (KLSG) participates in ATP binding. Residues 20 to 25 (GDEGFG) are involved in allosteric activation by GTP. G54 lines the UMP pocket. G55 and R59 together coordinate ATP. UMP contacts are provided by residues D74 and 135 to 142 (TGSPFFTT). Positions 162, 168, and 171 each coordinate ATP.

The protein belongs to the UMP kinase family. In terms of assembly, homohexamer.

The protein localises to the cytoplasm. It carries out the reaction UMP + ATP = UDP + ADP. Its pathway is pyrimidine metabolism; CTP biosynthesis via de novo pathway; UDP from UMP (UMPK route): step 1/1. Its activity is regulated as follows. Allosterically activated by GTP. Inhibited by UTP. In terms of biological role, catalyzes the reversible phosphorylation of UMP to UDP. The sequence is that of Uridylate kinase from Mannheimia succiniciproducens (strain KCTC 0769BP / MBEL55E).